A 153-amino-acid chain; its full sequence is Interleukin-2 (153 aa).

The N-terminal stretch at 1–20 (MYKVQLLSCIALTLALLTSS) is a signal peptide. An O-linked (GalNAc...) threonine glycan is attached at threonine 23. Cysteine 78 and cysteine 125 are oxidised to a cystine. Asparagine 111 is a glycosylation site (N-linked (GlcNAc...) asparagine).

It belongs to the IL-2 family.

The protein resides in the secreted. Functionally, cytokine produced by activated CD4-positive helper T-cells and to a lesser extend activated CD8-positive T-cells and natural killer (NK) cells that plays pivotal roles in the immune response and tolerance. Binds to a receptor complex composed of either the high-affinity trimeric IL-2R (IL2RA/CD25, IL2RB/CD122 and IL2RG/CD132) or the low-affinity dimeric IL-2R (IL2RB and IL2RG). Interaction with the receptor leads to oligomerization and conformation changes in the IL-2R subunits resulting in downstream signaling starting with phosphorylation of JAK1 and JAK3. In turn, JAK1 and JAK3 phosphorylate the receptor to form a docking site leading to the phosphorylation of several substrates including STAT5. This process leads to activation of several pathways including STAT, phosphoinositide-3-kinase/PI3K and mitogen-activated protein kinase/MAPK pathways. Functions as a T-cell growth factor and can increase NK-cell cytolytic activity as well. Promotes strong proliferation of activated B-cells and subsequently immunoglobulin production. Plays a pivotal role in regulating the adaptive immune system by controlling the survival and proliferation of regulatory T-cells, which are required for the maintenance of immune tolerance. Moreover, participates in the differentiation and homeostasis of effector T-cell subsets, including Th1, Th2, Th17 as well as memory CD8-positive T-cells. The polypeptide is Interleukin-2 (IL2) (Oryctolagus cuniculus (Rabbit)).